We begin with the raw amino-acid sequence, 89 residues long: DNA/RNA-binding protein Alba (89 aa).

Belongs to the histone-like Alba family.

The protein localises to the cytoplasm. The protein resides in the chromosome. Functionally, binds double-stranded DNA tightly but without sequence specificity. Involved in DNA compaction. This is DNA/RNA-binding protein Alba from Methanothrix thermoacetophila (strain DSM 6194 / JCM 14653 / NBRC 101360 / PT) (Methanosaeta thermophila).